Reading from the N-terminus, the 892-residue chain is Gamma-tubulin small complex component GCP3 (892 aa).

This sequence belongs to the TUBGCP family. As to quaternary structure, component of the gamma-tubulin small complex (gamma-TuSC) composed of tubulin gamma chain, gamma-tubulin complex protein 2 (GCP2) and gamma-tubulin complex protein 3 (GCP3). Interacts with tubulin gamma chain.

Its subcellular location is the cytoplasm. It localises to the cytoskeleton. It is found in the flagellum axoneme. The protein localises to the flagellum basal body. Component of the gamma-tubulin small complex (gamma-TuSC) involved in microtubule (MT) nucleation for the formation of median bodies and in the biogenesis of flagella. Gamma-TuSC may be required for the correct positioning of EB1 within the trophozoites. The polypeptide is Gamma-tubulin small complex component GCP3 (Giardia intestinalis (strain ATCC 50803 / WB clone C6) (Giardia lamblia)).